Consider the following 252-residue polypeptide: Small ribosomal subunit protein uS2 (252 aa).

A disordered region spans residues Ser-231–Ala-252. Residues Gln-239–Ala-252 show a composition bias toward acidic residues.

This sequence belongs to the universal ribosomal protein uS2 family.

In Acetivibrio thermocellus (strain ATCC 27405 / DSM 1237 / JCM 9322 / NBRC 103400 / NCIMB 10682 / NRRL B-4536 / VPI 7372) (Clostridium thermocellum), this protein is Small ribosomal subunit protein uS2.